We begin with the raw amino-acid sequence, 65 residues long: Photosystem II reaction center protein Z (65 aa).

Transmembrane regions (helical) follow at residues 8–28 and 41–61; these read AVFALVLLSFVLIVAVPVALA and YAGAALWTSLIIVIGVLDSVV.

This sequence belongs to the PsbZ family. As to quaternary structure, PSII is composed of 1 copy each of membrane proteins PsbA, PsbB, PsbC, PsbD, PsbE, PsbF, PsbH, PsbI, PsbJ, PsbK, PsbL, PsbM, PsbT, PsbX, PsbY, PsbZ, Psb30/Ycf12, at least 3 peripheral proteins of the oxygen-evolving complex and a large number of cofactors. It forms dimeric complexes.

The protein localises to the plastid. It is found in the cyanelle thylakoid membrane. Its function is as follows. May control the interaction of photosystem II (PSII) cores with the light-harvesting antenna, regulates electron flow through the 2 photosystem reaction centers. PSII is a light-driven water plastoquinone oxidoreductase, using light energy to abstract electrons from H(2)O, generating a proton gradient subsequently used for ATP formation. The chain is Photosystem II reaction center protein Z from Cyanophora paradoxa.